Consider the following 372-residue polypeptide: Sesquiterpene synthase Agr9 (372 aa).

Mg(2+) is bound by residues Asp-87, Asn-225, Ser-229, and Glu-233. Positions 87–91 (DEYTD) match the DDXXD motif motif. (2E,6E)-farnesyl diphosphate-binding residues include Arg-314 and Tyr-315.

The protein belongs to the terpene synthase family. Requires Mg(2+) as cofactor.

The enzyme catalyses (2E,6E)-farnesyl diphosphate = gamma-muurolene + diphosphate. It carries out the reaction (2E,6E)-farnesyl diphosphate = delta-cadinene + diphosphate. In terms of biological role, terpene cyclase that catalyzes the cyclization of farnesyl diphosphate (FPP) to various sesquiterpenes, including gamma-muurolene, beta-cadinene and delta-cadinene. This is Sesquiterpene synthase Agr9 from Cyclocybe aegerita (Black poplar mushroom).